Consider the following 673-residue polypeptide: DNA ligase (673 aa).

NAD(+)-binding positions include aspartate 38–aspartate 42, serine 87–leucine 88, and glutamate 119. Lysine 121 serves as the catalytic N6-AMP-lysine intermediate. NAD(+)-binding residues include arginine 142, glutamate 179, lysine 296, and lysine 320. Residues cysteine 414, cysteine 417, cysteine 432, and cysteine 438 each contribute to the Zn(2+) site. The BRCT domain occupies valine 595–serine 673.

Belongs to the NAD-dependent DNA ligase family. LigA subfamily. It depends on Mg(2+) as a cofactor. Mn(2+) serves as cofactor.

It carries out the reaction NAD(+) + (deoxyribonucleotide)n-3'-hydroxyl + 5'-phospho-(deoxyribonucleotide)m = (deoxyribonucleotide)n+m + AMP + beta-nicotinamide D-nucleotide.. DNA ligase that catalyzes the formation of phosphodiester linkages between 5'-phosphoryl and 3'-hydroxyl groups in double-stranded DNA using NAD as a coenzyme and as the energy source for the reaction. It is essential for DNA replication and repair of damaged DNA. The protein is DNA ligase of Coxiella burnetii (strain RSA 493 / Nine Mile phase I).